The sequence spans 63 residues: Large ribosomal subunit protein uL29 (63 aa).

Belongs to the universal ribosomal protein uL29 family.

The polypeptide is Large ribosomal subunit protein uL29 (rpmC) (Buchnera aphidicola subsp. Acyrthosiphon kondoi (Acyrthosiphon kondoi symbiotic bacterium)).